The sequence spans 163 residues: Protein-export protein SecB (163 aa).

Belongs to the SecB family. In terms of assembly, homotetramer, a dimer of dimers. One homotetramer interacts with 1 SecA dimer.

It is found in the cytoplasm. One of the proteins required for the normal export of preproteins out of the cell cytoplasm. It is a molecular chaperone that binds to a subset of precursor proteins, maintaining them in a translocation-competent state. It also specifically binds to its receptor SecA. The chain is Protein-export protein SecB from Brucella anthropi (strain ATCC 49188 / DSM 6882 / CCUG 24695 / JCM 21032 / LMG 3331 / NBRC 15819 / NCTC 12168 / Alc 37) (Ochrobactrum anthropi).